The sequence spans 137 residues: Proline-rich protein 13 (137 aa).

Disordered regions lie at residues Pro26–Pro54 and Val94–Asp137. A compositionally biased stretch (basic residues) spans Lys103–His124. Low complexity predominate over residues Ser125–Asp137.

The protein localises to the nucleus. Functionally, negatively regulates TSP1 expression at the level of transcription. This down-regulation was shown to reduce taxane-induced apoptosis. In Mus musculus (Mouse), this protein is Proline-rich protein 13 (Prr13).